A 614-amino-acid chain; its full sequence is Vitamin B12 transporter BtuB (614 aa).

The signal sequence occupies residues 1–20 (MIKKASLLTACSVTAFSAWA). The TonB box signature appears at 26 to 33 (DTLVVTAN). The TBDR plug domain maps to 38-152 (PRSTVLAPTT…IGGVVNIITT (115 aa)). Cyanocob(III)alamin contacts are provided by residues L83, S85, N92, and 110–111 (VS). The 460-residue stretch at 155–614 (EPGTEISAGW…EYTLSGSYTF (460 aa)) folds into the TBDR beta-barrel domain. The next 3 membrane-spanning stretches (beta stranded) occupy residues 158 to 165 (TEISAGWG), 169 to 178 (YQNYDVSTQQ), and 184 to 195 (TRVTLLGDYAHT). 4 residues coordinate Ca(2+): D199, Q211, D213, and D215. The next 2 membrane-spanning stretches (beta stranded) occupy residues 217–227 (FLSKTLYGALE) and 232–248 (DAWSGFVRGYGYDNRTN). Ca(2+)-binding residues include Y249 and D250. Cyanocob(III)alamin is bound at residue A251. D261 contributes to the Ca(2+) binding site. Transmembrane regions (beta stranded) follow at residues 263-277 (RKLYSQSWDAGLRYN), 279-296 (ELIKSQLITSYSHSKDYN), 309-325 (TLDEMKQYTVQWANNVI), 328-337 (HGSIGAGVDW), 353-369 (YDQRNTGIYLTGLQQVG), 371-381 (FTFEGAARSDD), 385-400 (FGRHGTWQTSAGWEFI), 403-417 (YRFIASYGTSYKAPN), 434-443 (KSKQWEGAFE), 449-458 (VNWRISGYRN), 473-490 (YYNEGKARIKGVEATANF), 494-509 (PLTHTVSYDYVDARNA), 517-529 (RRAKQQVKYQLDW), and 535-550 (DWGITYQYLGTRYDKD). Cyanocob(III)alamin is bound at residue T309. A cyanocob(III)alamin-binding site is contributed by R517. A cyanocob(III)alamin-binding site is contributed by Y551. The next 3 beta stranded transmembrane spans lie at 558–572 (TVKMGGVSLWDLAVA), 585–596 (IANLFDKDYETV), and 602–614 (AGREYTLSGSYTF). Positions 597–614 (YGYQTAGREYTLSGSYTF) match the TonB C-terminal box motif.

It belongs to the TonB-dependent receptor family. BtuB (TC 1.B.14.3.1) subfamily.

It is found in the cell outer membrane. Functionally, involved in the active translocation of vitamin B12 (cyanocobalamin) across the outer membrane to the periplasmic space. It derives its energy for transport by interacting with the trans-periplasmic membrane protein TonB. The polypeptide is Vitamin B12 transporter BtuB (Escherichia coli O9:H4 (strain HS)).